Reading from the N-terminus, the 128-residue chain is Large ribosomal subunit protein eL22 (128 aa).

The protein belongs to the eukaryotic ribosomal protein eL22 family. Component of the large ribosomal subunit.

It is found in the cytoplasm. Component of the large ribosomal subunit. The ribosome is a large ribonucleoprotein complex responsible for the synthesis of proteins in the cell. The polypeptide is Large ribosomal subunit protein eL22 (rpl22) (Xenopus tropicalis (Western clawed frog)).